Here is a 290-residue protein sequence, read N- to C-terminus: Formamidopyrimidine-DNA glycosylase (290 aa).

Proline 2 acts as the Schiff-base intermediate with DNA in catalysis. The Proton donor role is filled by glutamate 3. Lysine 58 (proton donor; for beta-elimination activity) is an active-site residue. Residues histidine 98, arginine 126, and arginine 171 each contribute to the DNA site. The FPG-type zinc-finger motif lies at phenylalanine 256–histidine 290. Catalysis depends on arginine 280, which acts as the Proton donor; for delta-elimination activity.

This sequence belongs to the FPG family. Monomer. It depends on Zn(2+) as a cofactor.

It carries out the reaction Hydrolysis of DNA containing ring-opened 7-methylguanine residues, releasing 2,6-diamino-4-hydroxy-5-(N-methyl)formamidopyrimidine.. The enzyme catalyses 2'-deoxyribonucleotide-(2'-deoxyribose 5'-phosphate)-2'-deoxyribonucleotide-DNA = a 3'-end 2'-deoxyribonucleotide-(2,3-dehydro-2,3-deoxyribose 5'-phosphate)-DNA + a 5'-end 5'-phospho-2'-deoxyribonucleoside-DNA + H(+). Involved in base excision repair of DNA damaged by oxidation or by mutagenic agents. Acts as a DNA glycosylase that recognizes and removes damaged bases. Has a preference for oxidized purines, such as 7,8-dihydro-8-oxoguanine (8-oxoG). Has AP (apurinic/apyrimidinic) lyase activity and introduces nicks in the DNA strand. Cleaves the DNA backbone by beta-delta elimination to generate a single-strand break at the site of the removed base with both 3'- and 5'-phosphates. This Cupriavidus taiwanensis (strain DSM 17343 / BCRC 17206 / CCUG 44338 / CIP 107171 / LMG 19424 / R1) (Ralstonia taiwanensis (strain LMG 19424)) protein is Formamidopyrimidine-DNA glycosylase.